The chain runs to 256 residues: Ciliary microtubule associated protein 1A (256 aa).

STPGR repeat units follow at residues 66–92 (PGPG…IYGR), 181–206 (PGPG…MTAR), and 217–242 (PGPG…FGIR).

This sequence belongs to the CIMAP family.

The protein resides in the cytoplasm. It localises to the cytoskeleton. Its subcellular location is the flagellum axoneme. In terms of biological role, outer dense fibers are filamentous structures located on the outside of the axoneme in the midpiece and principal piece of the mammalian sperm tail. May help to maintain the passive elastic structures and elastic recoil of the sperm tail. The protein is Ciliary microtubule associated protein 1A (cimap1a) of Xenopus tropicalis (Western clawed frog).